We begin with the raw amino-acid sequence, 503 residues long: Cobyric acid synthase (503 aa).

In terms of domain architecture, GATase cobBQ-type spans 245 to 447 (DISIAIIRLP…LHGIFDEISL (203 aa)). C326 serves as the catalytic Nucleophile. Residue H439 is part of the active site.

The protein belongs to the CobB/CobQ family. CobQ subfamily.

It functions in the pathway cofactor biosynthesis; adenosylcobalamin biosynthesis. In terms of biological role, catalyzes amidations at positions B, D, E, and G on adenosylcobyrinic A,C-diamide. NH(2) groups are provided by glutamine, and one molecule of ATP is hydrogenolyzed for each amidation. In Alkaliphilus metalliredigens (strain QYMF), this protein is Cobyric acid synthase.